The chain runs to 613 residues: Ribosome-associated molecular chaperone SSB1 (613 aa).

Ala2 is modified (N-acetylalanine). Residues 2–391 (AEGVFQGAIG…ILTGQSTSDE (390 aa)) are nucleotide binding domain (NBD). 16 to 18 (TTY) contacts ATP. Thr47 carries the phosphothreonine modification. Residues Lys73, 205–207 (GGT), 271–278 (ERAKRTLS), and Gly342 contribute to the ATP site. The tract at residues 392–402 (TKDLLLLDVAP) is inter-domain linker. Positions 403 to 613 (LSLGVGMQGD…RVVTKAMSSR (211 aa)) are substrate binding domain (SBD). The short motif at 428–430 (KRR) is the Contributes to ribosome binding element. At Thr431 the chain carries Phosphothreonine. The tract at residues 516–612 (SEEIEKMVNQ…KRVVTKAMSS (97 aa)) is lid domain (SBDalpha). A Nuclear export signal motif is present at residues 574–582 (IEAALSDAL). The tract at residues 601–613 (GLKRVVTKAMSSR) is required for interaction with ribosomes.

It belongs to the heat shock protein 70 family. Ssb-type Hsp70 subfamily. Binds to ribosomes. Binds close to the ribosomal tunnel exit via contacts with both ribosomal proteins RPL35, RPL39 and RPL19, and rRNA. Directly interacts with nascent polypeptides. This interaction is dependent on the ribosome-associated complex (RAC). Interacts with SSE1. Interacts with FES1. Interacts with NAP1.

It localises to the cytoplasm. The enzyme catalyses ATP + H2O = ADP + phosphate + H(+). Its function is as follows. Ribosome-bound, Hsp70-type chaperone that assists in the cotranslational folding of newly synthesized proteins in the cytosol. Stimulates folding by interacting with nascent chains, binding to short, largely hydrophobic sequences exposed by unfolded proteins, thereby stabilizing longer, more slowly translated, and aggregation-prone nascent polypeptides and domains that cannot fold stably until fully synthesized. The Hsp70-protein substrate interaction depends on ATP-binding and on allosteric regulation between the NBD and the SBD. The ATP-bound state is characterized by a fast exchange rate of substrate (low affinity state), while in the ADP-bound state exchange is much slower (high affinity state). During the Hsp70 cycle, the chaperone switches between the ATP-bound state (open conformation) and the ADP-bound state (closed conformation) by major conformational rearrangements involving mainly the lid domain. Ssb cooperates with a specific Hsp40/Hsp70 co-chaperone termed the ribosome-associated complex (RAC), which stimulates the ATPase activity of the ribosome-associated pool of Ssbs and switches it to the high affinity substrate binding state. Hsp110 chaperone SSE1 and FES1 act as nucleotide exchange factors that cause substrate release. In Saccharomyces cerevisiae (strain ATCC 204508 / S288c) (Baker's yeast), this protein is Ribosome-associated molecular chaperone SSB1.